The chain runs to 189 residues: Thymidine kinase (189 aa).

ATP contacts are provided by residues glycine 9 to threonine 16 and aspartate 85 to glutamine 88. Glutamate 86 (proton acceptor) is an active-site residue. Zn(2+) is bound by residues cysteine 143, cysteine 146, cysteine 180, and histidine 183.

It belongs to the thymidine kinase family. As to quaternary structure, homotetramer.

It localises to the cytoplasm. It catalyses the reaction thymidine + ATP = dTMP + ADP + H(+). The chain is Thymidine kinase from Streptococcus agalactiae serotype Ia (strain ATCC 27591 / A909 / CDC SS700).